The primary structure comprises 471 residues: Ubiquitin carboxyl-terminal hydrolase calypso (471 aa).

In terms of domain architecture, UCH catalytic spans 45-276 (GWLELESDPG…IRFNLMAVVP (232 aa)). Cysteine 131 functions as the Nucleophile in the catalytic mechanism. Histidine 213 (proton donor) is an active-site residue. One can recognise a ULD domain in the interval 375-403 (NYDKFICTFLSMLAHQGVLGELVSQHLLP). The interval 405-471 (KKVSGQGAAN…KGRNKCRKRK (67 aa)) is positively charged C-terminal tail required for binding nucleosomes. Positions 410-471 (QGAANRISKQ…KGRNKCRKRK (62 aa)) are disordered. The span at 420 to 447 (STTASAGGSTTGATASTPKTQQQQAAAA) shows a compositional bias: low complexity. Positions 457–471 (PGRRRKGRNKCRKRK) are enriched in basic residues.

The protein belongs to the peptidase C12 family. BAP1 subfamily. In terms of assembly, catalytic component of the polycomb repressive deubiquitinase (PR-DUB) complex, at least composed of caly/calypso, Asx and sba (MBD5/6 homolog). The PR-DUB complex associates with nucleosomes to mediate deubiquitination of histone H2AK118ub1 substrates; the association requires the positively charged C-terminal tail of caly, probably due to direct binding of DNA. Interacts (via ULD domain) with Asx (via DEUBAD domain); the interaction produces a stable heterodimer with a composite binding site for ubiquitin. Homodimerizes (via coiled-coil hinge-region between the UCH and ULD domains) to mediate assembly of 2 copies of the caly-Asx heterodimer into a bisymmetric tetramer; dimerization enhances PR-DUB association with nucleosomes.

The protein localises to the nucleus. It catalyses the reaction Thiol-dependent hydrolysis of ester, thioester, amide, peptide and isopeptide bonds formed by the C-terminal Gly of ubiquitin (a 76-residue protein attached to proteins as an intracellular targeting signal).. Catalytic component of the polycomb repressive deubiquitinase (PR-DUB) complex, a complex that specifically mediates deubiquitination of histone H2A monoubiquitinated at 'Lys-119' (H2AK118ub1). Mediates bisymmetric organization of the PR-DUB complex and is involved in association with nucleosomes to mediate deubiquitination. Does not deubiquitinate monoubiquitinated histone H2B. Required to maintain the transcriptionally repressive state of homeotic genes throughout development. The PR-DUB complex has weak or no activity toward 'Lys-48'- and 'Lys-63'-linked polyubiquitin chains. Polycomb group (PcG) protein. The polypeptide is Ubiquitin carboxyl-terminal hydrolase calypso (Drosophila yakuba (Fruit fly)).